The sequence spans 685 residues: Phenoloxidase subunit 1 (685 aa).

Residues 1–51 (MSDAKNNLLLFFDRPSEPCFMQKGEENAVFEIPDNYYPEKYQRVSNAIGNR) constitute a propeptide that is removed on maturation. Asn-184 carries N-linked (GlcNAc...) asparagine glycosylation. His-209, His-213, and His-239 together coordinate Cu cation. N-linked (GlcNAc...) asparagine glycans are attached at residues Asn-254 and Asn-324. The active-site Proton acceptor is the Glu-351. 3 residues coordinate Cu cation: His-366, His-370, and His-406. 2 N-linked (GlcNAc...) asparagine glycosylation sites follow: Asn-491 and Asn-540. Intrachain disulfides connect Cys-581-Cys-623 and Cys-583-Cys-630.

As to quaternary structure, heterodimer. Cu(2+) serves as cofactor. In terms of processing, the N-terminus is blocked. As to expression, synthesized by hemocytes and released into the hemolymph plasma.

It localises to the secreted. The enzyme catalyses 2 L-dopa + O2 = 2 L-dopaquinone + 2 H2O. It catalyses the reaction L-tyrosine + O2 = L-dopaquinone + H2O. In terms of biological role, this is a copper-containing oxidase that functions in the formation of pigments such as melanins and other polyphenolic compounds. Catalyzes the rate-limiting conversions of tyrosine to DOPA, DOPA to DOPA-quinone and possibly 5,6 dihydroxyindole to indole-5'6 quinone. This is Phenoloxidase subunit 1 from Bombyx mori (Silk moth).